The primary structure comprises 66 residues: Beta-mammal toxin Cv1 (66 aa).

Positions 1–66 constitute an LCN-type CS-alpha/beta domain; sequence KEGYIVNLST…VWPLPKKTCN (66 aa). 4 disulfides stabilise this stretch: C12–C65, C16–C41, C25–C46, and C29–C48.

Expressed by the venom gland.

It localises to the secreted. With respect to regulation, is susceptible to be neutralized by human antibodies scFvs 10FG2 and HV. Functionally, beta toxins bind voltage-independently at site-4 of sodium channels (Nav) and reduces peak current and shifts the voltage of activation toward more negative potentials thereby affecting sodium channel activation and promoting spontaneous and repetitive firing. This toxin is slightly toxic to mice. In Centruroides villegasi (Scorpion), this protein is Beta-mammal toxin Cv1.